The primary structure comprises 343 residues: Heat-inducible transcription repressor HrcA (343 aa).

It belongs to the HrcA family.

Functionally, negative regulator of class I heat shock genes (grpE-dnaK-dnaJ and groELS operons). Prevents heat-shock induction of these operons. This chain is Heat-inducible transcription repressor HrcA, found in Clostridium botulinum (strain Eklund 17B / Type B).